Consider the following 89-residue polypeptide: Small ribosomal subunit protein uS15 (89 aa).

It belongs to the universal ribosomal protein uS15 family. As to quaternary structure, part of the 30S ribosomal subunit. Forms a bridge to the 50S subunit in the 70S ribosome, contacting the 23S rRNA.

Its function is as follows. One of the primary rRNA binding proteins, it binds directly to 16S rRNA where it helps nucleate assembly of the platform of the 30S subunit by binding and bridging several RNA helices of the 16S rRNA. Functionally, forms an intersubunit bridge (bridge B4) with the 23S rRNA of the 50S subunit in the ribosome. The polypeptide is Small ribosomal subunit protein uS15 (Streptococcus agalactiae serotype Ia (strain ATCC 27591 / A909 / CDC SS700)).